Consider the following 177-residue polypeptide: Large ribosomal subunit protein uL6 (177 aa).

This sequence belongs to the universal ribosomal protein uL6 family. As to quaternary structure, part of the 50S ribosomal subunit.

Its function is as follows. This protein binds to the 23S rRNA, and is important in its secondary structure. It is located near the subunit interface in the base of the L7/L12 stalk, and near the tRNA binding site of the peptidyltransferase center. The polypeptide is Large ribosomal subunit protein uL6 (Novosphingobium aromaticivorans (strain ATCC 700278 / DSM 12444 / CCUG 56034 / CIP 105152 / NBRC 16084 / F199)).